The sequence spans 116 residues: Large ribosomal subunit protein uL18 (116 aa).

Belongs to the universal ribosomal protein uL18 family. In terms of assembly, part of the 50S ribosomal subunit; part of the 5S rRNA/L5/L18/L25 subcomplex. Contacts the 5S and 23S rRNAs.

Functionally, this is one of the proteins that bind and probably mediate the attachment of the 5S RNA into the large ribosomal subunit, where it forms part of the central protuberance. The protein is Large ribosomal subunit protein uL18 of Shewanella piezotolerans (strain WP3 / JCM 13877).